Reading from the N-terminus, the 411-residue chain is Na(+)-translocating NADH-quinone reductase subunit B (411 aa).

3 helical membrane-spanning segments follow: residues 56 to 76 (IMIT…YNAG), 121 to 141 (FLPI…LFAV), and 161 to 181 (ILPA…GVVI). Thr228 is subject to FMN phosphoryl threonine. 5 helical membrane passes run 254-274 (FIPG…AAVL), 284-304 (IMLG…AIGS), 309-329 (MFGM…GMVF), 345-365 (LLFG…NPAF), and 368-388 (GIML…HFFV).

This sequence belongs to the NqrB/RnfD family. Composed of six subunits; NqrA, NqrB, NqrC, NqrD, NqrE and NqrF. FMN serves as cofactor.

It localises to the cell inner membrane. The enzyme catalyses a ubiquinone + n Na(+)(in) + NADH + H(+) = a ubiquinol + n Na(+)(out) + NAD(+). Functionally, NQR complex catalyzes the reduction of ubiquinone-1 to ubiquinol by two successive reactions, coupled with the transport of Na(+) ions from the cytoplasm to the periplasm. NqrA to NqrE are probably involved in the second step, the conversion of ubisemiquinone to ubiquinol. This chain is Na(+)-translocating NADH-quinone reductase subunit B, found in Chromohalobacter salexigens (strain ATCC BAA-138 / DSM 3043 / CIP 106854 / NCIMB 13768 / 1H11).